The following is a 320-amino-acid chain: MDYRKIIKEIGRGKNHARDLDRDTARGLYAHMLNGEVPDLELGGVLIALRIKGEGEAEMLGFYEAMQNHTIKLTPPAGKPMPIVIPSYNGARKQANLTPLLAILLHKLGFPVVVHGVSEDPTRVLTETIFELMGITPTLHGGQAQAKLDEHQPVFMPVGAFCPPLEKQLAMRWRMGVRNSAHTLAKLATPFAEGEALRLSSVSHPEYIGRVAKFFSDIGGRALLMHGTEGEVYANPQRCPQINLIDREGMRVLYEKQDTAGSELLPQAKDPETTAQWIERCLAGSEPIPESLKIQMACCLVATGEAATISDGLARVNQAF.

Belongs to the anthranilate phosphoribosyltransferase family.

This is an uncharacterized protein from Escherichia coli (strain K12).